The primary structure comprises 432 residues: Adenylosuccinate synthetase (432 aa).

GTP-binding positions include 13–19 and 41–43; these read GDEGKGK and GHT. Residue aspartate 14 is the Proton acceptor of the active site. Mg(2+) is bound by residues aspartate 14 and glycine 41. IMP contacts are provided by residues 14-17, 39-42, threonine 130, arginine 144, glutamine 225, threonine 240, and arginine 304; these read DEGK and NAGH. Residue histidine 42 is the Proton donor of the active site. 300–306 provides a ligand contact to substrate; sequence ATTGRRR. GTP contacts are provided by residues arginine 306, 332–334, and 415–417; these read KLD and STG.

Belongs to the adenylosuccinate synthetase family. As to quaternary structure, homodimer. Mg(2+) is required as a cofactor.

The protein resides in the cytoplasm. The enzyme catalyses IMP + L-aspartate + GTP = N(6)-(1,2-dicarboxyethyl)-AMP + GDP + phosphate + 2 H(+). The protein operates within purine metabolism; AMP biosynthesis via de novo pathway; AMP from IMP: step 1/2. Functionally, plays an important role in the de novo pathway of purine nucleotide biosynthesis. Catalyzes the first committed step in the biosynthesis of AMP from IMP. This Edwardsiella ictaluri (strain 93-146) protein is Adenylosuccinate synthetase.